A 213-amino-acid chain; its full sequence is Protein FAM177A1 (213 aa).

Position 1 is an N-acetylmethionine (Met1). The residue at position 70 (Ser70) is a Phosphoserine. Thr71 carries the phosphothreonine modification. The stretch at 136–173 (IDEYYRMKKEEEEEEEENRMSEEAEKQYQQNKLQTDSI) forms a coiled coil. The disordered stretch occupies residues 147 to 175 (EEEEEENRMSEEAEKQYQQNKLQTDSIVQ). Polar residues predominate over residues 162-175 (QYQQNKLQTDSIVQ).

Belongs to the FAM177 family.

The polypeptide is Protein FAM177A1 (FAM177A1) (Homo sapiens (Human)).